Here is a 167-residue protein sequence, read N- to C-terminus: CGG triplet repeat-binding protein 1 (167 aa).

The residue at position 56 (Ser-56) is a Phosphoserine. The short motif at 80–84 (RKKQR) is the Nuclear localization signal element. At Ser-164 the chain carries Phosphoserine.

In terms of tissue distribution, ubiquitous. Highly expressed in placenta, thymus, lymph nodes, cerebellum and cerebral cortex. Low expression in other regions of the brain.

The protein resides in the nucleus. Functionally, binds to nonmethylated 5'-d(CGG)(n)-3' trinucleotide repeats in the FMR1 promoter. May play a role in regulating FMR1 promoter. This Homo sapiens (Human) protein is CGG triplet repeat-binding protein 1 (CGGBP1).